A 1004-amino-acid chain; its full sequence is 2-oxoglutarate dehydrogenase E1 component (1004 aa).

It belongs to the alpha-ketoglutarate dehydrogenase family. As to quaternary structure, homodimer. Part of the 2-oxoglutarate dehydrogenase (OGDH) complex composed of E1 (2-oxoglutarate dehydrogenase), E2 (dihydrolipoamide succinyltransferase) and E3 (dihydrolipoamide dehydrogenase); the complex contains multiple copies of the three enzymatic components (E1, E2 and E3). The cofactor is thiamine diphosphate.

The catalysed reaction is N(6)-[(R)-lipoyl]-L-lysyl-[protein] + 2-oxoglutarate + H(+) = N(6)-[(R)-S(8)-succinyldihydrolipoyl]-L-lysyl-[protein] + CO2. In terms of biological role, E1 component of the 2-oxoglutarate dehydrogenase (OGDH) complex which catalyzes the decarboxylation of 2-oxoglutarate, the first step in the conversion of 2-oxoglutarate to succinyl-CoA and CO(2). In Brucella ovis (strain ATCC 25840 / 63/290 / NCTC 10512), this protein is 2-oxoglutarate dehydrogenase E1 component.